The following is a 595-amino-acid chain: Adenine deaminase 2 (595 aa).

This sequence belongs to the metallo-dependent hydrolases superfamily. Adenine deaminase family. It depends on Mn(2+) as a cofactor.

The catalysed reaction is adenine + H2O + H(+) = hypoxanthine + NH4(+). This chain is Adenine deaminase 2, found in Rhizobium etli (strain ATCC 51251 / DSM 11541 / JCM 21823 / NBRC 15573 / CFN 42).